Reading from the N-terminus, the 186-residue chain is ADP-ribosylation factor-like protein 8B (186 aa).

Residue Met1 is modified to N-acetylmethionine. The note=Mediates targeting to membranes intramembrane region spans Met1–Glu19. Residues Gln29–Thr35, Asp71–Gln75, and Asn130–Asp133 contribute to the GTP site. Lys141 participates in a covalent cross-link: Glycyl lysine isopeptide (Lys-Gly) (interchain with G-Cter in ubiquitin).

It belongs to the small GTPase superfamily. Arf family. Interacts with tubulin. Interacts with BORCS5; recruits ARL8B to lysosomes. Interacts with VPS41; the interaction mediates the recruitment of the HOPS complex to lysosomes. Interacts (GTP-bound form) with PLEKHM2 (via RUN domain); the interaction is required to recruit the motor protein kinesin-1 on lysosomes. Interacts (GTP-bound form) with PLEKHM1 (via RUN domain); the interaction is required for PLEKHM1 localization to lysosomes and for ARL8B function in delivery and degradation of endocytic and autophagic cargo in lysosomes. PLEKHM1 and PLEKHM2 compete for interaction with ARL8B. Interacts (GTP-bound form) with RUFY1; the interaction is required for RUFY1 endosomal location. When GTP-bound, interacts with RUFY3 and RUFY4, but not with RUFY1, nor RUFY2. In terms of processing, ubiquitinated at Lys-141 by RNF167, leading to its degradation. Ubiquitously expressed.

The protein localises to the late endosome membrane. It is found in the lysosome membrane. It localises to the cytoplasm. The protein resides in the cytoskeleton. Its subcellular location is the spindle. The protein localises to the cell projection. It is found in the axon. It localises to the synapse. The protein resides in the cytolytic granule membrane. Its subcellular location is the early endosome membrane. The catalysed reaction is GTP + H2O = GDP + phosphate + H(+). Its function is as follows. Small GTPase which cycles between active GTP-bound and inactive GDP-bound states. In its active state, binds to a variety of effector proteins playing a key role in the regulation of lysosomal positioning which is important for nutrient sensing, natural killer cell-mediated cytotoxicity and antigen presentation. Along with its effectors, orchestrates lysosomal transport and fusion. Localizes specifically to lysosomal membranes and mediates anterograde lysosomal motility by recruiting PLEKHM2, which in turn recruits the motor protein kinesin-1 on lysosomes. Required for lysosomal and cytolytic granule exocytosis. Critical factor involved in NK cell-mediated cytotoxicity. Drives the polarization of cytolytic granules and microtubule-organizing centers (MTOCs) toward the immune synapse between effector NK lymphocytes and target cells. In neurons, mediates the anterograde axonal long-range transport of presynaptic lysosome-related vesicles required for presynaptic biogenesis and synaptic function. Also acts as a regulator of endosome to lysosome trafficking pathways of special significance for host defense. Recruits RUFY1 onto early endosomes regulating endosomes to trans-Golgi network proteins retrieval. Regulates cargo trafficking to lysosomes by binding to PLEKHM1 and recruiting the HOPS subunit VPS41, resulting in functional assembly of the HOPS complex on lysosomal membranes. Plays an important role in cargo delivery to lysosomes for antigen presentation and microbial killing. Directs the intersection of CD1d with lipid antigens in lysosomes, and plays a role in intersecting phagosomes with lysosomes to generate phagolysosomes that kill microbes. Involved in the process of MHC II presentation. Regulates the delivery of antigens to lysosomes and the formation of MHC II-peptide complexes through the recruitment of the HOPS complex to lysosomes allowing the fusion of late endosomes to lysosomes. May play a role in chromosome segregation. In terms of biological role, (Microbial infection) During Mycobacterium tuberculosis (Mtb) infection, is required for plasma membrane repair by controlling the exocytosis of lysosomes in macrophages. ARL8B secretion pathway is crucial to control the type of cell death of the M.tuberculosis-infected macrophages, distinguishing avirulent from virulent Mtb induced necrotic cell death. (Microbial infection) During infection, coronaviruses such as SARS-CoV-2 and the chaperone HSPA5/GRP78 are probably co-released through ARL8B-dependent lysosomal exocytic pathway for unconventional egress. This chain is ADP-ribosylation factor-like protein 8B, found in Homo sapiens (Human).